The primary structure comprises 134 residues: Protein NrdI (134 aa).

Belongs to the NrdI family.

Probably involved in ribonucleotide reductase function. The protein is Protein NrdI of Rhizobium etli (strain CIAT 652).